Here is a 325-residue protein sequence, read N- to C-terminus: MIALGIEGTAHTLGIGIVTEKKVLANVFDTLTTEKGGIHPKEAAEHHARLLKPLLRKALQTAGITMEDVDVIAFSQGPGLGPALRVVATAARALAIKYNKPIVGVNHCIAHVEITKMFGVKDPVGLYVSGGNTQVLALEGGRYRVFGETLDIGIGNAIDTFARELGIGFPGGPKIEKLALKGERYIELPSAVKGMDLSFSGLLTEAVRKYRTGRYRVEDLAYSFQETAFSALVEVTERAVAHTGKNEVVLVGGVAANNRLREMLKIMAEDRGVEFFVPPYDLCRDNGAMIAYTGLRMYLGGVRFKISDTVVKQKFRTDEVDVTWS.

3 residues coordinate Fe cation: His107, His111, and Tyr127. Substrate-binding positions include 127 to 131 (YVSGG), Asp159, Gly172, Glu176, and Asn257. Fe cation is bound at residue Asp285.

The protein belongs to the KAE1 / TsaD family. Monomer. Component of the KEOPS complex that consists of Kae1, Bud32, Cgi121 and Pcc1; the whole complex dimerizes. It depends on Fe(2+) as a cofactor.

It is found in the cytoplasm. The enzyme catalyses L-threonylcarbamoyladenylate + adenosine(37) in tRNA = N(6)-L-threonylcarbamoyladenosine(37) in tRNA + AMP + H(+). Functionally, required for the formation of a threonylcarbamoyl group on adenosine at position 37 (t(6)A37) in tRNAs that read codons beginning with adenine. Is a component of the KEOPS complex that is probably involved in the transfer of the threonylcarbamoyl moiety of threonylcarbamoyl-AMP (TC-AMP) to the N6 group of A37. Kae1 likely plays a direct catalytic role in this reaction, but requires other protein(s) of the complex to fulfill this activity. This is tRNA N6-adenosine threonylcarbamoyltransferase from Thermococcus gammatolerans (strain DSM 15229 / JCM 11827 / EJ3).